A 490-amino-acid chain; its full sequence is Betaine aldehyde dehydrogenase (490 aa).

The K(+) site is built by Ile-27 and Asp-93. 150–152 (GAW) is a binding site for NAD(+). Lys-162 acts as the Charge relay system in catalysis. Residue 176–179 (KPSE) coordinates NAD(+). Val-180 contacts K(+). 230 to 233 (GTDT) is an NAD(+) binding site. Position 246 (Leu-246) interacts with K(+). Glu-252 serves as the catalytic Proton acceptor. The NAD(+) site is built by Gly-254, Cys-286, and Glu-387. Cys-286 acts as the Nucleophile in catalysis. A Cysteine sulfenic acid (-SOH) modification is found at Cys-286. K(+) contacts are provided by Lys-457 and Gly-460. Residue Glu-464 is the Charge relay system of the active site.

This sequence belongs to the aldehyde dehydrogenase family. Dimer of dimers. The cofactor is K(+).

The catalysed reaction is betaine aldehyde + NAD(+) + H2O = glycine betaine + NADH + 2 H(+). It functions in the pathway amine and polyamine biosynthesis; betaine biosynthesis via choline pathway; betaine from betaine aldehyde: step 1/1. Functionally, involved in the biosynthesis of the osmoprotectant glycine betaine. Catalyzes the irreversible oxidation of betaine aldehyde to the corresponding acid. This Pseudomonas fluorescens (strain Pf0-1) protein is Betaine aldehyde dehydrogenase.